Consider the following 155-residue polypeptide: Small ribosomal subunit protein uS7cz/uS7cy (155 aa).

The protein belongs to the universal ribosomal protein uS7 family. Part of the 30S ribosomal subunit.

Its subcellular location is the plastid. The protein localises to the chloroplast. One of the primary rRNA binding proteins, it binds directly to 16S rRNA where it nucleates assembly of the head domain of the 30S subunit. The sequence is that of Small ribosomal subunit protein uS7cz/uS7cy (rps7-A) from Amborella trichopoda.